A 304-amino-acid chain; its full sequence is tRNA pseudouridine synthase B (304 aa).

Catalysis depends on D38, which acts as the Nucleophile.

It belongs to the pseudouridine synthase TruB family. Type 1 subfamily.

It catalyses the reaction uridine(55) in tRNA = pseudouridine(55) in tRNA. Functionally, responsible for synthesis of pseudouridine from uracil-55 in the psi GC loop of transfer RNAs. This Listeria innocua serovar 6a (strain ATCC BAA-680 / CLIP 11262) protein is tRNA pseudouridine synthase B.